A 434-amino-acid polypeptide reads, in one-letter code: Meiosis-specific kinetochore protein (434 aa).

Disordered stretches follow at residues 1 to 102 (MDKI…PCET) and 249 to 289 (VFAE…PDNK). The segment covering 46 to 62 (KGKEQGLRKITEKKELS) has biased composition (basic and acidic residues). The segment covering 64–76 (LTGSSSQRPSLLS) has biased composition (polar residues). The POLO box domain (PBD)-binding signature appears at 334 to 336 (STP). The required for localization to kinetochores stretch occupies residues 391–394 (EICC). A disordered region spans residues 404 to 424 (QMRRKDPAVKNRCSPPKDVPL).

Interacts with CENPC. Interacts with PLK1; required for recruitment of PLK1 at kinetochores. In terms of tissue distribution, germ cell-specific. Expressed in both testis and ovary. Not expressed in other tissues.

It is found in the chromosome. The protein localises to the centromere. The protein resides in the kinetochore. Its function is as follows. Key regulator of kinetochore function during meiosis I: required both for mono-orientation of kinetochores on sister chromosomes and protection of centromeric cohesin from separase-mediated cleavage. Acts by facilitating kinetochore mono-orientation during meiosis I, when kinetochores on sister chromosomes face the same direction and are thus captured and pulled by spindle fibers from the same pole. Also required to prevent cleavage of cohesin at centromeres during meiosis I, possibly by acting as a regulator of the shugoshin-dependent protection pathway. Acts in collaboration with PLK1: required for PLK1 enrichment to kinetochores. Not required during meiosis II or mitosis. The protein is Meiosis-specific kinetochore protein of Mus musculus (Mouse).